A 172-amino-acid chain; its full sequence is MEYFSVGKIVNTQGLQGEMRVLSVSDFTEERFQKGARLALFDDKDRFVQEVEIASHRKHKQFDIIKFKGMYHINAIEQFKGYSLKIAKENQGKLAEGEFYYHQIIGLEVYEKDQLVGEIKEILQPGANDVWVVKRQSKRDLLLPYIPSVVLCVDIEKHRVDVEIMEGLDDED.

One can recognise a PRC barrel domain in the interval 95–168; sequence AEGEFYYHQI…RVDVEIMEGL (74 aa).

Belongs to the RimM family. In terms of assembly, binds ribosomal protein uS19.

The protein localises to the cytoplasm. An accessory protein needed during the final step in the assembly of 30S ribosomal subunit, possibly for assembly of the head region. Essential for efficient processing of 16S rRNA. May be needed both before and after RbfA during the maturation of 16S rRNA. It has affinity for free ribosomal 30S subunits but not for 70S ribosomes. The protein is Ribosome maturation factor RimM of Streptococcus equi subsp. equi (strain 4047).